We begin with the raw amino-acid sequence, 447 residues long: Cytochrome P450 BJ-4 (447 aa).

C392 contacts heme.

This sequence belongs to the cytochrome P450 family. Requires heme as cofactor.

Its function is as follows. Cytochromes P450 are a group of heme-thiolate monooxygenases. They oxidize a variety of structurally unrelated compounds, including steroids, fatty acids, and xenobiotics. The protein is Cytochrome P450 BJ-4 (cyp117) of Bradyrhizobium diazoefficiens (strain JCM 10833 / BCRC 13528 / IAM 13628 / NBRC 14792 / USDA 110).